Consider the following 174-residue polypeptide: Flavodoxin 1 (174 aa).

The region spanning 4–168 (IGIFYGSSSG…RLERWIAVLQ (165 aa)) is the Flavodoxin-like domain. Residues 10-14 (SSSGV) and 89-122 (LFGA…ALVG) contribute to the FMN site.

Requires FMN as cofactor.

Functionally, flavodoxins are low-potential electron donors to a number of redox enzymes. AvFld 1 is able to donate electrons to the assimilatory nitrate reductase of A.vinelandii to catalyze the reduction of nitrate to nitrite. This is Flavodoxin 1 from Azotobacter vinelandii (strain DJ / ATCC BAA-1303).